We begin with the raw amino-acid sequence, 407 residues long: MKGVLFIVASLVAFATGQDCPAYYVRSQSGQSCYRYFNMRVPYRMASEFCEMVTPCGNGPAKMGALASVSSPQENMEIYQLVAGFSQDNQMENEVWLGWNSMSPFFWEDGTPAYPNGFAAFSSSGMAPPRPGAPPSRAWPVNPQNPMSGPPGRAPVMKRQNPPVRPGQGGRQIPQGVGPQWEAVEVTAMRAFVCEVPAGRNVPIGQQPGMGQGFGNQQPGFGNQPGMGGRQPGFGNQPGMGGRQPGFGNQPGMGGRQPGFGNQPGVGGRQPGFGNQPGMGGRQPGFGNQPGVGGRQPGFGNQPGMGGQQPGVGGRQPGFGNQPGMGGNQPGMGGQQPGMGGRQPGVGGRQPGMGGQQPGMGGRQPGMGGQQPNNPNNPNNPNNPNNPNNPNPRFNRPRMLQEADALA.

The first 17 residues, 1–17, serve as a signal peptide directing secretion; that stretch reads MKGVLFIVASLVAFATG. The region spanning 29–160 is the C-type lectin domain; the sequence is SGQSCYRYFN…PGRAPVMKRQ (132 aa). Disordered regions lie at residues 143–176 and 204–407; these read PQNP…IPQG and IGQQ…DALA. Positions 223–369 are enriched in gly residues; it reads NQPGMGGRQP…MGGRQPGMGG (147 aa). Positions 370–398 are enriched in low complexity; it reads QQPNNPNNPNNPNNPNNPNNPNPRFNRPR.

It belongs to the SM50 family. Expressed specifically in the micromere/primary mesenchyme cells (PMC) lineage.

Its subcellular location is the secreted. In terms of biological role, major matrix protein of the sea urchin embryo spicule which directs crystal growth in certain orientations and inhibit growth in others. The chain is 41 kDa spicule matrix protein from Hemicentrotus pulcherrimus (Sea urchin).